We begin with the raw amino-acid sequence, 151 residues long: Probable cGMP 3',5'-cyclic phosphodiesterase subunit delta (151 aa).

This sequence belongs to the PDE6D/unc-119 family. As to quaternary structure, interacts with Pde6.

The protein localises to the nucleus. The protein resides in the cytoplasm. This is Probable cGMP 3',5'-cyclic phosphodiesterase subunit delta from Drosophila virilis (Fruit fly).